Reading from the N-terminus, the 158-residue chain is Transcription elongation factor GreA (158 aa).

The stretch at 45–72 (AEYHAAREQQSFIEGRIKQLEGELSHAE) forms a coiled coil.

This sequence belongs to the GreA/GreB family.

In terms of biological role, necessary for efficient RNA polymerase transcription elongation past template-encoded arresting sites. The arresting sites in DNA have the property of trapping a certain fraction of elongating RNA polymerases that pass through, resulting in locked ternary complexes. Cleavage of the nascent transcript by cleavage factors such as GreA or GreB allows the resumption of elongation from the new 3'terminus. GreA releases sequences of 2 to 3 nucleotides. The sequence is that of Transcription elongation factor GreA from Xanthomonas campestris pv. campestris (strain ATCC 33913 / DSM 3586 / NCPPB 528 / LMG 568 / P 25).